Here is a 1145-residue protein sequence, read N- to C-terminus: MDRKTRRANFKNLQPRLTRSTKAAADTLSLSNFFATPENAEEVPSCLADIPVQPDPPAPKIKPIRTSNVFEKPGPKPKKAPKLKASTVSTSSGARRGRGKSKQQPSISNFLRNEQIFAEVTAQHCMADNFSADDIEMALALSKSESEKHGRLRLHDDDDAVVDLLDDEEKSTERIRHKLQKYGFRTAAKEDYKSLAVLPVVASKGGRRGKWANRFTSLTLRNPDVQQKKLEEKVSALLGQEMRGKEPNGEDCCLTPYTVITAALKELRAEGESRILREPSEGPIDDLESYYVTDLFEVSRTPAHHLLKNWAAIQGRDFSPERETQKCRQLRQQHELVYAELERYYGDPQKLEEEVMQELDELEKLVADNMIEDDSVVINIVEAESSSTGSSPSKEPPDKRPKMTMEDKENLQPTTSKASLTVPAQSTRCTSPDLFADSEDEPDIVTTAISNEPEDVRNLSMKVYKNVSISERSSSVAEIEIVSSNDEPSQITTYEVFSSDEVKTVSNATQEKISFDDDFIDLTQEFDMVEFNESKPRTPNLIASSETDSNVDNLNGDTILDFSSQEVSCPISKELYAKYAKVETFPVWNAAAEEEDKIEFSLSMERDLKSSEQSSHQLGILTTPNDTEHSSSFSELNFSRNSLRRSVSLSTDLSFKSPLNWKMNSSAEKRVSPAASPYKQSDASVDLTQNSDDENDAILLSDEEINYSIWKGNKTVKDLDIGDDSSDSCFASPVTKKRAIPQFQTEEDLDAFLMDFSTDGNGSQGSHSPNKSALSKERAEFGILDAAPSQPFSLSELQSHADKEKSSDNEINWAEASFLDAPAKPLSRRSSHKFNELLAKISKPAHNSGDDFDEFDQMVFQSTKEAASSAGETSDMPQGLDLLLKGEIKTTAIPETRAPGNQTPIEPQQVDVDGNVYSVRVCHTPKPDFATLPESEILQQLYKYGIKPLKRKQAVKMLEFIYNQTHPIMKTAAVQDLPARSEPIVRSKSTPVIMERPHSQVAKSTSKTLKAIGTKKDLTFNDATGEELLRFSQSLAPSLCDDFETFVMQTNVTKKTPQPLVPLHIAWHNLICANPQLHESVLTYEPIDLQAVYLHLKHMGHRYDPKDLKTFFDRRCIIFRYELGAPGKQAERHVRRHTKKPSKRK.

The segment at 48-108 is disordered; sequence ADIPVQPDPP…GKSKQQPSIS (61 aa). Positions 321–372 form a coiled coil; it reads ERETQKCRQLRQQHELVYAELERYYGDPQKLEEEVMQELDELEKLVADNMIE. Residues 382–393 show a composition bias toward low complexity; it reads EAESSSTGSSPS. Disordered stretches follow at residues 382–442, 613–634, and 666–689; these read EAES…EDEP, QSSH…SSFS, and SAEK…DLTQ. Basic and acidic residues predominate over residues 395–410; it reads EPPDKRPKMTMEDKEN. Polar residues-rich tracts occupy residues 411–430, 613–633, and 678–689; these read LQPT…TRCT, QSSH…SSSF, and YKQSDASVDLTQ.

It belongs to the SLX4 family. Forms a heterodimer with SLX1. Interacts with mei-9; catalytic subunit of the MEI-9-ERCC1 endonuclease.

Its subcellular location is the nucleus. In terms of biological role, regulatory subunit that interacts with and increases the activity of different structure-specific endonucleases. Has several distinct roles in protecting genome stability by resolving diverse forms of deleterious DNA structures originating from replication and recombination intermediates and from DNA damage. Component of the SLX1-SLX4 structure-specific endonuclease that resolves DNA secondary structures generated during DNA repair and recombination. Has endonuclease activity towards branched DNA substrates, introducing single-strand cuts in duplex DNA close to junctions with ss-DNA. Interacts with the structure-specific MEI-9-ERCC1 endonuclease to generate meiotic crossovers. The sequence is that of Structure-specific endonuclease subunit SLX4 (mus312) from Drosophila melanogaster (Fruit fly).